The primary structure comprises 403 residues: Histidine--tRNA ligase (403 aa).

It belongs to the class-II aminoacyl-tRNA synthetase family. As to quaternary structure, homodimer.

It is found in the cytoplasm. The enzyme catalyses tRNA(His) + L-histidine + ATP = L-histidyl-tRNA(His) + AMP + diphosphate + H(+). This Sulfurimonas denitrificans (strain ATCC 33889 / DSM 1251) (Thiomicrospira denitrificans (strain ATCC 33889 / DSM 1251)) protein is Histidine--tRNA ligase.